Consider the following 89-residue polypeptide: Small ribosomal subunit protein uS15 (89 aa).

Belongs to the universal ribosomal protein uS15 family. In terms of assembly, part of the 30S ribosomal subunit. Forms a bridge to the 50S subunit in the 70S ribosome, contacting the 23S rRNA.

Its function is as follows. One of the primary rRNA binding proteins, it binds directly to 16S rRNA where it helps nucleate assembly of the platform of the 30S subunit by binding and bridging several RNA helices of the 16S rRNA. In terms of biological role, forms an intersubunit bridge (bridge B4) with the 23S rRNA of the 50S subunit in the ribosome. In Thermomicrobium roseum (strain ATCC 27502 / DSM 5159 / P-2), this protein is Small ribosomal subunit protein uS15.